The sequence spans 89 residues: MAKKSWIAREEKRERLYEKHKEERRRLKEEEKWVELQKLPRDSSPVRQNNRCELCGRQRGYLRKFGVCRICFRELALEGKIPGIRKASW.

Residues Cys52, Cys55, Cys68, and Cys71 each contribute to the Zn(2+) site.

This sequence belongs to the universal ribosomal protein uS14 family. As to quaternary structure, part of the 30S ribosomal subunit. Contacts proteins S3 and S10. Requires Zn(2+) as cofactor.

Binds 16S rRNA, required for the assembly of 30S particles and may also be responsible for determining the conformation of the 16S rRNA at the A site. The chain is Small ribosomal subunit protein uS14 (rpsN) from Salinibacter ruber (strain DSM 13855 / M31).